Consider the following 756-residue polypeptide: Inactive carboxypeptidase-like protein X2 (756 aa).

The N-terminal stretch at M1 to A25 is a signal peptide. Residues E51–D131 are disordered. Basic and acidic residues predominate over residues E68–P78. Over residues P79–K90 the composition is skewed to basic residues. Over residues K113–D131 the composition is skewed to basic and acidic residues. One can recognise an F5/8 type C domain in the interval E134–C293. A disulfide bridge connects residues C136 and C293. Residues N231, N241, N281, N337, and N491 are each glycosylated (N-linked (GlcNAc...) asparagine). Residues K317–V640 enclose the Peptidase M14 domain.

The protein belongs to the peptidase M14 family.

It localises to the secreted. Its function is as follows. May be involved in cell-cell interactions. The protein is Inactive carboxypeptidase-like protein X2 (CPXM2) of Homo sapiens (Human).